Here is a 202-residue protein sequence, read N- to C-terminus: Matrix protein (202 aa).

The PPXY motif signature appears at 35 to 38 (PPES). Positions 115–151 (KIRRTLVFQWAESRGPLDGEELEYSQEITWDDDSEFI) are essential for glycoprotein binding.

Belongs to the lyssavirus matrix protein family. Homomultimer. Interacts with nucleoprotein and with the cytoplasmic domain of glycoprotein.

It localises to the virion membrane. The protein localises to the host endomembrane system. In terms of biological role, plays a major role in assembly and budding of virion. Completely covers the ribonucleoprotein coil and keep it in condensed bullet-shaped form. Inhibits viral transcription and stimulates replication. Plays a major role in early induction of TRAIL-mediated apoptosis in infected neurons. This is Matrix protein (M) from Myotis mystacinus (Whiskered bat).